Here is a 702-residue protein sequence, read N- to C-terminus: Cell adhesion molecule CEACAM5 (702 aa).

A signal peptide spans 1–34 (MESPSAPPHRWCIPWQRLLLTASLLTFWNPPTTA). The Ig-like V-type domain maps to 35 to 144 (KLTIESTPFN…TGQFRVYPEL (110 aa)). 28 N-linked (GlcNAc...) asparagine glycosylation sites follow: N104, N115, N152, N182, N197, N204, N208, N246, N256, N274, N288, N292, N309, N330, N351, N360, N375, N432, N466, N480, N508, N529, N553, N560, N580, N612, N650, and N665. Ig-like C2-type domains are found at residues 145–232 (PKPS…VILN), 240–315 (PTIS…TVTT), 323–410 (PKPF…VILN), 418–495 (PTIS…KTIT), 501–588 (PKPS…VTLD), and 593–675 (PDTP…ITVS). An intrachain disulfide couples C167 to C215. Cysteines 259 and 299 form a disulfide. An intrachain disulfide couples C345 to C393. Cysteines 437 and 477 form a disulfide. The cysteines at positions 523 and 571 are disulfide-linked. C615 and C655 form a disulfide bridge. A lipid anchor (GPI-anchor amidated alanine) is attached at A685. A propeptide spans 686–702 (GATVGIMIGVLVGVALI) (removed in mature form).

It belongs to the immunoglobulin superfamily. CEA family. In terms of assembly, homodimer. Post-translationally, complex immunoreactive glycoprotein with a MW of 180 kDa comprising 60% carbohydrate. Expressed in columnar epithelial and goblet cells of the colon (at protein level). Found in adenocarcinomas of endodermally derived digestive system epithelium and fetal colon.

The protein localises to the cell membrane. Its subcellular location is the apical cell membrane. It is found in the cell surface. In terms of biological role, cell surface glycoprotein that plays a role in cell adhesion, intracellular signaling and tumor progression. Mediates homophilic and heterophilic cell adhesion with other carcinoembryonic antigen-related cell adhesion molecules, such as CEACAM6. Plays a role as an oncogene by promoting tumor progression; induces resistance to anoikis of colorectal carcinoma cells. (Microbial infection) Receptor for E.coli Dr adhesins. Binding of E.coli Dr adhesins leads to dissociation of the homodimer. The protein is Cell adhesion molecule CEACAM5 of Homo sapiens (Human).